Here is a 361-residue protein sequence, read N- to C-terminus: Phosphate acyltransferase (361 aa).

Positions 342 to 361 (ADGAAAEQGPTPRRTAPRQT) are disordered.

This sequence belongs to the PlsX family. As to quaternary structure, homodimer. Probably interacts with PlsY.

The protein resides in the cytoplasm. The catalysed reaction is a fatty acyl-[ACP] + phosphate = an acyl phosphate + holo-[ACP]. Its pathway is lipid metabolism; phospholipid metabolism. Functionally, catalyzes the reversible formation of acyl-phosphate (acyl-PO(4)) from acyl-[acyl-carrier-protein] (acyl-ACP). This enzyme utilizes acyl-ACP as fatty acyl donor, but not acyl-CoA. The polypeptide is Phosphate acyltransferase (Anaeromyxobacter sp. (strain K)).